The sequence spans 207 residues: Enolase (207 aa).

Gln-162 provides a ligand contact to (2R)-2-phosphoglycerate. Catalysis depends on Glu-204, which acts as the Proton donor.

It belongs to the enolase family.

It is found in the cytoplasm. It localises to the secreted. The protein localises to the cell surface. It catalyses the reaction (2R)-2-phosphoglycerate = phosphoenolpyruvate + H2O. It functions in the pathway carbohydrate degradation; glycolysis; pyruvate from D-glyceraldehyde 3-phosphate: step 4/5. Its function is as follows. Catalyzes the reversible conversion of 2-phosphoglycerate (2-PG) into phosphoenolpyruvate (PEP). It is essential for the degradation of carbohydrates via glycolysis. In Campylobacter fetus, this protein is Enolase.